Consider the following 228-residue polypeptide: Ribose-5-phosphate isomerase A (228 aa).

Substrate is bound by residues Thr27–Thr30, Asp86–Asp89, and Lys100–Gly103. Glu109 functions as the Proton acceptor in the catalytic mechanism. Lys127 serves as a coordination point for substrate.

The protein belongs to the ribose 5-phosphate isomerase family. As to quaternary structure, homodimer.

The enzyme catalyses aldehydo-D-ribose 5-phosphate = D-ribulose 5-phosphate. The protein operates within carbohydrate degradation; pentose phosphate pathway; D-ribose 5-phosphate from D-ribulose 5-phosphate (non-oxidative stage): step 1/1. In terms of biological role, catalyzes the reversible conversion of ribose-5-phosphate to ribulose 5-phosphate. The polypeptide is Ribose-5-phosphate isomerase A (Borrelia hermsii (strain HS1 / DAH)).